Consider the following 578-residue polypeptide: G protein-coupled receptor kinase 4 (578 aa).

M1 is subject to N-acetylmethionine. The interval 1–154 is N-terminal; sequence MELENIVANS…ECTRVAHNYL (154 aa). The RGS domain maps to 52–172; the sequence is DYSSLCDKQP…QESSYFSQFL (121 aa). The 263-residue stretch at 187–449 folds into the Protein kinase domain; it reads FRHYRVLGKG…AAGVKQHPVF (263 aa). Residues 193 to 201 and K216 contribute to the ATP site; that span reads LGKGGFGEV. The Proton acceptor role is filled by D312. The 66-residue stretch at 450 to 515 folds into the AGC-kinase C-terminal domain; sequence KDINFRRLEA…GCVSIPWQNE (66 aa). Phosphoserine is present on S485.

Belongs to the protein kinase superfamily. AGC Ser/Thr protein kinase family. GPRK subfamily. Interacts with DRD3. Post-translationally, palmitoylated. As to expression, isoform 1, isoform 2, isoform 3, and isoform 4 are expressed in testis. Isoform 4 is expressed in myometrium.

The protein localises to the cytoplasm. The protein resides in the cell cortex. It carries out the reaction [G-protein-coupled receptor] + ATP = [G-protein-coupled receptor]-phosphate + ADP + H(+). With respect to regulation, inhibited by heparin. Its function is as follows. Specifically phosphorylates the activated forms of G protein-coupled receptors. GRK4-alpha can phosphorylate rhodopsin and its activity is inhibited by calmodulin; the other three isoforms do not phosphorylate rhodopsin and do not interact with calmodulin. GRK4-alpha and GRK4-gamma phosphorylate DRD3. Phosphorylates ADRB2. The polypeptide is G protein-coupled receptor kinase 4 (GRK4) (Homo sapiens (Human)).